We begin with the raw amino-acid sequence, 146 residues long: Large ribosomal subunit protein uL15 (146 aa).

The interval 1-39 (MTLKLHNLRPAPGAKTAKTRVGRGEGSKGKTAGRGTKGT) is disordered.

The protein belongs to the universal ribosomal protein uL15 family. Part of the 50S ribosomal subunit.

In terms of biological role, binds to the 23S rRNA. In Nocardioides sp. (strain ATCC BAA-499 / JS614), this protein is Large ribosomal subunit protein uL15.